Here is a 799-residue protein sequence, read N- to C-terminus: Heat shock protein 90-6, mitochondrial (799 aa).

Residues 1–48 constitute a mitochondrion transit peptide; it reads MIRLSKRSVSTLLRSGNQSFRIAAAASTSRSSPSATDVKRSDTESRWY. The span at 23-35 shows a compositional bias: low complexity; it reads AAAASTSRSSPSA. Positions 23 to 61 are disordered; the sequence is AAAASTSRSSPSATDVKRSDTESRWYSSLTNGQSKNSGS. A compositionally biased stretch (polar residues) spans 46-61; it reads RWYSSLTNGQSKNSGS. ATP contacts are provided by residues Glu124, Asn128, Asp170, Met175, 190–191, 214–219, and Thr269; these read SG and QFGVGF. The tract at residues 314–337 is disordered; it reads EVEVEDDPTETKKDDQDDQTEKKK. Over residues 322–334 the composition is skewed to basic and acidic residues; it reads TETKKDDQDDQTE. ATP is bound at residue Arg464. The span at 766–777 shows a compositional bias: polar residues; that stretch reads SPEVQPQQQQMA. Residues 766-799 are disordered; the sequence is SPEVQPQQQQMAHSHDAETFEAEVVEPVEVDGKK. Residues 784 to 799 show a composition bias toward acidic residues; sequence TFEAEVVEPVEVDGKK.

The protein belongs to the heat shock protein 90 family. As to quaternary structure, interacts with P23-1.

Its subcellular location is the mitochondrion. In terms of biological role, molecular chaperone which stabilizes unfolding protein intermediates and functions as a folding molecular chaperone that assists the non-covalent folding of proteins in an ATP-dependent manner. This Arabidopsis thaliana (Mouse-ear cress) protein is Heat shock protein 90-6, mitochondrial.